Consider the following 389-residue polypeptide: Trans-2-enoyl-CoA reductase [NADH] (389 aa).

NAD(+) contacts are provided by residues 47-52 (GASTGY), 73-74 (FE), 110-111 (DA), and 138-139 (LA). Tyr224 serves as a coordination point for substrate. The Proton donor role is filled by Tyr234. NAD(+) is bound by residues Lys243 and 272-274 (LVT).

This sequence belongs to the TER reductase family. Monomer.

The catalysed reaction is a 2,3-saturated acyl-CoA + NAD(+) = a (2E)-enoyl-CoA + NADH + H(+). It functions in the pathway lipid metabolism; fatty acid biosynthesis. Functionally, involved in the fatty acid synthesis (FAS II). Catalyzes the reduction of a carbon-carbon double bond in an enoyl moiety that is covalently linked to a coenzyme A (CoA). This is Trans-2-enoyl-CoA reductase [NADH] from Clostridium perfringens (strain SM101 / Type A).